We begin with the raw amino-acid sequence, 301 residues long: Sulfate adenylyltransferase subunit 2 (301 aa).

The protein belongs to the PAPS reductase family. CysD subfamily. In terms of assembly, heterodimer composed of CysD, the smaller subunit, and CysN.

The catalysed reaction is sulfate + ATP + H(+) = adenosine 5'-phosphosulfate + diphosphate. It participates in sulfur metabolism; hydrogen sulfide biosynthesis; sulfite from sulfate: step 1/3. In terms of biological role, with CysN forms the ATP sulfurylase (ATPS) that catalyzes the adenylation of sulfate producing adenosine 5'-phosphosulfate (APS) and diphosphate, the first enzymatic step in sulfur assimilation pathway. APS synthesis involves the formation of a high-energy phosphoric-sulfuric acid anhydride bond driven by GTP hydrolysis by CysN coupled to ATP hydrolysis by CysD. This chain is Sulfate adenylyltransferase subunit 2, found in Citrifermentans bemidjiense (strain ATCC BAA-1014 / DSM 16622 / JCM 12645 / Bem) (Geobacter bemidjiensis).